The sequence spans 507 residues: ATP synthase subunit alpha, chloroplastic (507 aa).

Glycine 170 to threonine 177 lines the ATP pocket.

The protein belongs to the ATPase alpha/beta chains family. F-type ATPases have 2 components, CF(1) - the catalytic core - and CF(0) - the membrane proton channel. CF(1) has five subunits: alpha(3), beta(3), gamma(1), delta(1), epsilon(1). CF(0) has four main subunits: a, b, b' and c.

Its subcellular location is the plastid. The protein resides in the chloroplast thylakoid membrane. The catalysed reaction is ATP + H2O + 4 H(+)(in) = ADP + phosphate + 5 H(+)(out). Produces ATP from ADP in the presence of a proton gradient across the membrane. The alpha chain is a regulatory subunit. The protein is ATP synthase subunit alpha, chloroplastic of Dioscorea elephantipes (Elephant's foot yam).